The chain runs to 333 residues: Serine/threonine-protein phosphatase 4 catalytic subunit 1 (333 aa).

The disordered stretch occupies residues 1 to 29; it reads MALAVADTQNETFARSESPTSGPSDQLST. The span at 7–27 shows a compositional bias: polar residues; sequence DTQNETFARSESPTSGPSDQL. Residues D79, H81, D107, and N139 each coordinate Mn(2+). H140 functions as the Proton donor in the catalytic mechanism. The Mn(2+) site is built by H189 and H264. At L333 the chain carries Leucine methyl ester.

Belongs to the PPP phosphatase family. PP-4 (PP-X) subfamily. Serine/threonine-protein phosphatase 4 (PP4) occurs in different assemblies of the catalytic and one or more regulatory subunits. The regulatory subunits are likely to be ppfr-1, ppfr-2, ppfr-4 and smk-1. Interacts with mei-1. Requires Mn(2+) as cofactor. In terms of processing, methylation at the C-terminal Leu-333 is critical for interactions with regulatory subunits.

It is found in the cytoplasm. Its subcellular location is the cytoskeleton. It localises to the microtubule organizing center. The protein resides in the centrosome. The enzyme catalyses O-phospho-L-seryl-[protein] + H2O = L-seryl-[protein] + phosphate. It carries out the reaction O-phospho-L-threonyl-[protein] + H2O = L-threonyl-[protein] + phosphate. Protein phosphatase which plays an essential role in meiosis and in early embryonic mitosis. During spermatocyte meiosis and the first embryonic mitosis, regulates centrosome maturation, and thus spindle formation, by recruiting some of the components of the pericentriolar material (PCM). During oocyte meiosis I, regulates meiotic chromosome dynamics including synapsis-independent chromosome pairing, restriction of synapsis to homologous chromosomes, programmed DNA double-strand break initiation and crossover formation resulting in chiasma formation. During oocyte meiosis II and probably together with regulatory subunit ppfr-1, may regulate microtubule severing by dephosphorylating and activating mei-1, a component of the katanin microtubule severing complex. This is Serine/threonine-protein phosphatase 4 catalytic subunit 1 (pph-4.1) from Caenorhabditis briggsae.